The chain runs to 429 residues: Argininosuccinate lyase (429 aa).

It belongs to the lyase 1 family. Argininosuccinate lyase subfamily.

The protein resides in the cytoplasm. It catalyses the reaction 2-(N(omega)-L-arginino)succinate = fumarate + L-arginine. It functions in the pathway amino-acid biosynthesis; L-arginine biosynthesis; L-arginine from L-ornithine and carbamoyl phosphate: step 3/3. The protein is Argininosuccinate lyase of Pyrobaculum neutrophilum (strain DSM 2338 / JCM 9278 / NBRC 100436 / V24Sta) (Thermoproteus neutrophilus).